Reading from the N-terminus, the 241-residue chain is 1-(5-phosphoribosyl)-5-[(5-phosphoribosylamino)methylideneamino] imidazole-4-carboxamide isomerase (241 aa).

The Proton acceptor role is filled by aspartate 8. The active-site Proton donor is aspartate 129.

This sequence belongs to the HisA/HisF family.

It is found in the cytoplasm. The enzyme catalyses 1-(5-phospho-beta-D-ribosyl)-5-[(5-phospho-beta-D-ribosylamino)methylideneamino]imidazole-4-carboxamide = 5-[(5-phospho-1-deoxy-D-ribulos-1-ylimino)methylamino]-1-(5-phospho-beta-D-ribosyl)imidazole-4-carboxamide. It participates in amino-acid biosynthesis; L-histidine biosynthesis; L-histidine from 5-phospho-alpha-D-ribose 1-diphosphate: step 4/9. The protein is 1-(5-phosphoribosyl)-5-[(5-phosphoribosylamino)methylideneamino] imidazole-4-carboxamide isomerase of Rhodospirillum rubrum (strain ATCC 11170 / ATH 1.1.1 / DSM 467 / LMG 4362 / NCIMB 8255 / S1).